A 1180-amino-acid chain; its full sequence is Chitin synthase 6 (1180 aa).

A run of 2 helical transmembrane segments spans residues 108-128 and 374-394; these read FTIC…IIAF and LLLA…IAAL. The N-linked (GlcNAc...) asparagine glycan is linked to asparagine 737. A run of 3 helical transmembrane segments spans residues 762-782, 795-815, and 822-842; these read FIVF…VYLV, IPYI…ILFL, and YIGW…FLPI. The DEK-C domain maps to 1118–1175; the sequence is DPTDEEIKSAVQTYLANQPSLMNVTKRSVREALVAAFPNAELSYKKSMINKAIDDTLS.

It belongs to the chitin synthase family. Class V subfamily.

The protein localises to the cell membrane. The protein resides in the cytoplasmic vesicle membrane. The catalysed reaction is [(1-&gt;4)-N-acetyl-beta-D-glucosaminyl](n) + UDP-N-acetyl-alpha-D-glucosamine = [(1-&gt;4)-N-acetyl-beta-D-glucosaminyl](n+1) + UDP + H(+). Its function is as follows. Polymerizes chitin, a structural polymer of the cell wall and septum, by transferring the sugar moiety of UDP-GlcNAc to the non-reducing end of the growing chitin polymer. Plays a crucial role during infection and allows the fungus to overcome the resistance of the plant that checks growth of the pathogen and eventually eliminates it. The chain is Chitin synthase 6 from Mycosarcoma maydis (Corn smut fungus).